Consider the following 520-residue polypeptide: Amine oxidase [flavin-containing] B (520 aa).

An N-acetylserine modification is found at Ser2. At 2–489 the chain is on the cytoplasmic side; that stretch reads SSKCDVVVVG…TFLERHLPSV (488 aa). Lys52 is subject to N6-acetyllysine. S-8alpha-FAD cysteine is present on Cys397. The chain crosses the membrane as a helical; Anchor for type IV membrane protein span at residues 490-516; sequence PGLLRLIGLTAIFSATALGYLAHKRGL. At 517 to 520 the chain is on the mitochondrial intermembrane side; sequence LVRV.

This sequence belongs to the flavin monoamine oxidase family. In terms of assembly, monomer, homo- or heterodimer (containing two subunits of similar size). Each subunit contains a covalently bound flavin. Enzymatically active as monomer. FAD is required as a cofactor.

The protein localises to the mitochondrion outer membrane. It carries out the reaction a secondary aliphatic amine + O2 + H2O = a primary amine + an aldehyde + H2O2. The catalysed reaction is (R)-adrenaline + O2 + H2O = (R)-3,4-dihydroxymandelaldehyde + methylamine + H2O2. The enzyme catalyses a primary methyl amine + O2 + H2O = an aldehyde + H2O2 + NH4(+). It catalyses the reaction benzylamine + O2 + H2O = benzaldehyde + H2O2 + NH4(+). It carries out the reaction dopamine + O2 + H2O = 3,4-dihydroxyphenylacetaldehyde + H2O2 + NH4(+). The catalysed reaction is tyramine + O2 + H2O = (4-hydroxyphenyl)acetaldehyde + H2O2 + NH4(+). The enzyme catalyses (R)-noradrenaline + O2 + H2O = (R)-3,4-dihydroxymandelaldehyde + H2O2 + NH4(+). It catalyses the reaction 2-phenylethylamine + O2 + H2O = 2-phenylacetaldehyde + H2O2 + NH4(+). It carries out the reaction N-acetylputrescine + O2 + H2O = 4-acetamidobutanal + H2O2 + NH4(+). Its function is as follows. Catalyzes the oxidative deamination of primary and some secondary amines such as neurotransmitters, and exogenous amines including the tertiary amine, neurotoxin 1-methyl-4-phenyl-1,2,3,6-tetrahydropyridine (MPTP), with concomitant reduction of oxygen to hydrogen peroxide and participates in the metabolism of neuroactive and vasoactive amines in the central nervous system and peripheral tissues. Preferentially degrades benzylamine and phenylethylamine. In Sus scrofa (Pig), this protein is Amine oxidase [flavin-containing] B.